A 108-amino-acid polypeptide reads, in one-letter code: Urease subunit gamma (108 aa).

It belongs to the urease gamma subunit family. Heterotrimer of UreA (gamma), UreB (beta) and UreC (alpha) subunits. Three heterotrimers associate to form the active enzyme.

It localises to the cytoplasm. The enzyme catalyses urea + 2 H2O + H(+) = hydrogencarbonate + 2 NH4(+). It participates in nitrogen metabolism; urea degradation; CO(2) and NH(3) from urea (urease route): step 1/1. The chain is Urease subunit gamma from Haloquadratum walsbyi (strain DSM 16790 / HBSQ001).